Reading from the N-terminus, the 257-residue chain is Indole-3-glycerol phosphate synthase (257 aa).

It belongs to the TrpC family.

The catalysed reaction is 1-(2-carboxyphenylamino)-1-deoxy-D-ribulose 5-phosphate + H(+) = (1S,2R)-1-C-(indol-3-yl)glycerol 3-phosphate + CO2 + H2O. The protein operates within amino-acid biosynthesis; L-tryptophan biosynthesis; L-tryptophan from chorismate: step 4/5. The protein is Indole-3-glycerol phosphate synthase of Halalkalibacterium halodurans (strain ATCC BAA-125 / DSM 18197 / FERM 7344 / JCM 9153 / C-125) (Bacillus halodurans).